Consider the following 173-residue polypeptide: Disulfide bond formation protein B (173 aa).

Over 1 to 14 (MIEFLRRIAAHRLA) the chain is Cytoplasmic. The chain crosses the membrane as a helical span at residues 15–31 (WSLLAASALFLELSALF). The Periplasmic segment spans residues 32-49 (FQHVLGLHPCVMCVYERI). C41 and C44 form a disulfide bridge. Residues 50–65 (ATLGVLTAGLLGMVAP) traverse the membrane as a helical segment. At 66–72 (QKWYVRW) the chain is on the cytoplasmic side. A helical transmembrane segment spans residues 73–90 (SALLLWGSSAFWGLKLAL). The Periplasmic portion of the chain corresponds to 91 to 145 (KHVDYQVNPSPFNVCEGFVDFPSWAPLDQWIPWMFYPDGDCSEVTWQFLSFSMPQ). The cysteines at positions 105 and 131 are disulfide-linked. The chain crosses the membrane as a helical span at residues 146 to 164 (WLVAIFAVYLLVFVVVAIG). Residues 165 to 173 (NLVKGRCCS) lie on the Cytoplasmic side of the membrane.

Belongs to the DsbB family.

Its subcellular location is the cell inner membrane. Required for disulfide bond formation in some periplasmic proteins. Acts by oxidizing the DsbA protein. This is Disulfide bond formation protein B from Aeromonas hydrophila subsp. hydrophila (strain ATCC 7966 / DSM 30187 / BCRC 13018 / CCUG 14551 / JCM 1027 / KCTC 2358 / NCIMB 9240 / NCTC 8049).